We begin with the raw amino-acid sequence, 331 residues long: Pantothenate kinase (331 aa).

109–116 (GSVAVGKS) is a binding site for ATP.

This sequence belongs to the prokaryotic pantothenate kinase family.

Its subcellular location is the cytoplasm. The catalysed reaction is (R)-pantothenate + ATP = (R)-4'-phosphopantothenate + ADP + H(+). It participates in cofactor biosynthesis; coenzyme A biosynthesis; CoA from (R)-pantothenate: step 1/5. The sequence is that of Pantothenate kinase from Rhizobium meliloti (strain 1021) (Ensifer meliloti).